Here is a 99-residue protein sequence, read N- to C-terminus: A-type ATP synthase subunit F (99 aa).

This sequence belongs to the V-ATPase F subunit family. Has multiple subunits with at least A(3), B(3), C, D, E, F, H, I and proteolipid K(x).

It is found in the cell membrane. Functionally, component of the A-type ATP synthase that produces ATP from ADP in the presence of a proton gradient across the membrane. In Methanococcus maripaludis (strain C6 / ATCC BAA-1332), this protein is A-type ATP synthase subunit F.